Reading from the N-terminus, the 96-residue chain is Large ribosomal subunit protein eL21 (96 aa).

The protein belongs to the eukaryotic ribosomal protein eL21 family.

The sequence is that of Large ribosomal subunit protein eL21 from Methanoregula boonei (strain DSM 21154 / JCM 14090 / 6A8).